Here is a 308-residue protein sequence, read N- to C-terminus: MSMTELSGVRTFLLGLQERVTAAVAEVDGGDFITDAWQKEPGEPLQGNGITKILENGEVFERAGCGFSHVQGSRLPPSATQHRPELAGAPFEAMGVSLVFHPRNPYVPTVHMNVRMLAATPVSAGPAEAVCWFGGGMDLTPYYGFDEDAVHFHQTCKDALAPFGGDKYPRFKQWCDEYFYLKHRQEQRGIGGIFFDDFQELGLEQSFAMMQSVADSFLPAYLPIVRRRQSQPYGARERDFQLYRRGRYVEFNLVWDRGTHFGLQSGGRTESILMSMPPLASWSYQHRAEAGSPEERLYKEFLIRRDWV.

Serine 97 serves as a coordination point for substrate. 2 residues coordinate a divalent metal cation: histidine 101 and histidine 111. Histidine 111 serves as the catalytic Proton donor. 113-115 contributes to the substrate binding site; the sequence is NVR. Residues histidine 153 and histidine 183 each coordinate a divalent metal cation. An important for dimerization region spans residues 248-283; it reads YVEFNLVWDRGTHFGLQSGGRTESILMSMPPLASWS. Residue 266-268 participates in substrate binding; it reads GGR.

Belongs to the aerobic coproporphyrinogen-III oxidase family. In terms of assembly, homodimer. A divalent metal cation is required as a cofactor.

The protein resides in the cytoplasm. The enzyme catalyses coproporphyrinogen III + O2 + 2 H(+) = protoporphyrinogen IX + 2 CO2 + 2 H2O. The protein operates within porphyrin-containing compound metabolism; protoporphyrin-IX biosynthesis; protoporphyrinogen-IX from coproporphyrinogen-III (O2 route): step 1/1. Functionally, involved in the heme biosynthesis. Catalyzes the aerobic oxidative decarboxylation of propionate groups of rings A and B of coproporphyrinogen-III to yield the vinyl groups in protoporphyrinogen-IX. The polypeptide is Oxygen-dependent coproporphyrinogen-III oxidase (Polaromonas sp. (strain JS666 / ATCC BAA-500)).